We begin with the raw amino-acid sequence, 129 residues long: Small ribosomal subunit protein uS11 (129 aa).

This sequence belongs to the universal ribosomal protein uS11 family. Part of the 30S ribosomal subunit. Interacts with proteins S7 and S18. Binds to IF-3.

In terms of biological role, located on the platform of the 30S subunit, it bridges several disparate RNA helices of the 16S rRNA. Forms part of the Shine-Dalgarno cleft in the 70S ribosome. The protein is Small ribosomal subunit protein uS11 of Pseudomonas putida (strain GB-1).